Reading from the N-terminus, the 71-residue chain is Potassium voltage-gated channel subfamily E member 2 (71 aa).

The chain crosses the membrane as a helical span at residues 7-27 (VILYLMVMIGMFSFIIVAILV). Residues 28–71 (STVKSKRREHSNDPYHQYIVEDWQEKYKSQILHFEEAKATIHEN) are Cytoplasmic-facing.

It belongs to the potassium channel KCNE family. As to quaternary structure, interacts with KCNB1. Associates with KCNH2/ERG1. May associate with KCNQ2 and KCNQ3. Associates with HCN1 and probably HCN2. Heteromultimer with KCNC2. Interacts with KCNC2. Interacts with KCNQ1; forms a heterooligomer complex that targets to the membrane raft and leading to currents with an apparently instantaneous activation, a rapid deactivation process and a linear current-voltage relationship and decreases the amplitude of the outward current. As to expression, detected in heart; expression is highest in the SA node and the right atrium, and barely detectable in the ventricle.

It is found in the cell membrane. Its subcellular location is the apical cell membrane. Its function is as follows. Ancillary protein that functions as a regulatory subunit of the voltage-gated potassium (Kv) channel complex composed of pore-forming and potassium-conducting alpha subunits and of regulatory beta subunits. KCNE2 beta subunit modulates the gating kinetics and enhances stability of the channel complex. Alters the gating of the delayed rectifier Kv channel containing KCNB1 alpha subunit. Associates with KCNH2/HERG alpha subunit Kv channel to form the rapidly activating component of the delayed rectifying potassium current (IKr) in heart. May associate with KCNQ2 and/or KCNQ3 alpha subunits to modulate the native M-type current. May associate with HCN1 and HCN2 channel subunits to increase potassium current. Forms a heterooligomer complex with KCNQ1/KVLQT1 alpha subunits which leads to currents with an apparently instantaneous activation, a rapid deactivation process and a linear current-voltage relationship and decreases the amplitude of the outward current. KCNQ1-KCNE2 channel associates with Na(+)-coupled myo-inositol symporter in the apical membrane of choroid plexus epithelium and regulates the myo-inositol gradient between blood and cerebrospinal fluid with an impact on neuron excitability. The sequence is that of Potassium voltage-gated channel subfamily E member 2 (KCNE2) from Oryctolagus cuniculus (Rabbit).